Reading from the N-terminus, the 380-residue chain is Queuine tRNA-ribosyltransferase (380 aa).

The Proton acceptor role is filled by Asp-96. Residues 96 to 100, Asp-150, Gln-193, and Gly-220 contribute to the substrate site; that span reads DSGGF. The tract at residues 251 to 257 is RNA binding; the sequence is GVGAPDS. Residue Asp-270 is the Nucleophile of the active site. The tract at residues 275-279 is RNA binding; important for wobble base 34 recognition; that stretch reads TRIAR. Residues Cys-308, Cys-310, Cys-313, and His-339 each coordinate Zn(2+).

Belongs to the queuine tRNA-ribosyltransferase family. In terms of assembly, homodimer. Within each dimer, one monomer is responsible for RNA recognition and catalysis, while the other monomer binds to the replacement base PreQ1. The cofactor is Zn(2+).

The enzyme catalyses 7-aminomethyl-7-carbaguanine + guanosine(34) in tRNA = 7-aminomethyl-7-carbaguanosine(34) in tRNA + guanine. The protein operates within tRNA modification; tRNA-queuosine biosynthesis. Its function is as follows. Catalyzes the base-exchange of a guanine (G) residue with the queuine precursor 7-aminomethyl-7-deazaguanine (PreQ1) at position 34 (anticodon wobble position) in tRNAs with GU(N) anticodons (tRNA-Asp, -Asn, -His and -Tyr). Catalysis occurs through a double-displacement mechanism. The nucleophile active site attacks the C1' of nucleotide 34 to detach the guanine base from the RNA, forming a covalent enzyme-RNA intermediate. The proton acceptor active site deprotonates the incoming PreQ1, allowing a nucleophilic attack on the C1' of the ribose to form the product. After dissociation, two additional enzymatic reactions on the tRNA convert PreQ1 to queuine (Q), resulting in the hypermodified nucleoside queuosine (7-(((4,5-cis-dihydroxy-2-cyclopenten-1-yl)amino)methyl)-7-deazaguanosine). The polypeptide is Queuine tRNA-ribosyltransferase (Streptococcus pneumoniae (strain Taiwan19F-14)).